Reading from the N-terminus, the 85-residue chain is Probable Thioredoxin (85 aa).

The Glutaredoxin domain maps to 2–85 (VVNIEVFTSP…LFEAINDEME (84 aa)). Cysteine 13 and cysteine 16 are disulfide-bonded.

It belongs to the glutaredoxin family.

Its subcellular location is the cytoplasm. Functionally, acts to maintain redox homeostasis; functions as a protein disulfide reductase. This chain is Probable Thioredoxin, found in Methanothermobacter thermautotrophicus (strain ATCC 29096 / DSM 1053 / JCM 10044 / NBRC 100330 / Delta H) (Methanobacterium thermoautotrophicum).